The following is a 176-amino-acid chain: Peptidoglycan-associated lipoprotein (176 aa).

A signal peptide spans 1–32 (MSRIDTPAASRMQTIARNPVMIALVMTLALAG). C33 is lipidated: N-palmitoyl cysteine. The S-diacylglycerol cysteine moiety is linked to residue C33. The OmpA-like domain occupies 58–175 (QQDFTVNVGD…RAVTVLGGAG (118 aa)).

The protein belongs to the Pal lipoprotein family. In terms of assembly, the Tol-Pal system is composed of five core proteins: the inner membrane proteins TolA, TolQ and TolR, the periplasmic protein TolB and the outer membrane protein Pal. They form a network linking the inner and outer membranes and the peptidoglycan layer.

The protein localises to the cell outer membrane. Functionally, part of the Tol-Pal system, which plays a role in outer membrane invagination during cell division and is important for maintaining outer membrane integrity. This is Peptidoglycan-associated lipoprotein from Rhizobium meliloti (strain 1021) (Ensifer meliloti).